Reading from the N-terminus, the 359-residue chain is Peptide chain release factor 1 (359 aa).

Glutamine 235 is modified (N5-methylglutamine).

The protein belongs to the prokaryotic/mitochondrial release factor family. In terms of processing, methylated by PrmC. Methylation increases the termination efficiency of RF1.

The protein resides in the cytoplasm. Functionally, peptide chain release factor 1 directs the termination of translation in response to the peptide chain termination codons UAG and UAA. This chain is Peptide chain release factor 1, found in Nitrosomonas eutropha (strain DSM 101675 / C91 / Nm57).